Consider the following 258-residue polypeptide: Phosphate import ATP-binding protein PstB (258 aa).

The ABC transporter domain occupies 5 to 247 (IDVSGLNAYY…ERIFSNPSVQ (243 aa)). Residue 37-44 (GPSGCGKS) coordinates ATP.

This sequence belongs to the ABC transporter superfamily. Phosphate importer (TC 3.A.1.7) family. In terms of assembly, the complex is composed of two ATP-binding proteins (PstB), two transmembrane proteins (PstC and PstA) and a solute-binding protein (PstS).

Its subcellular location is the cell membrane. The enzyme catalyses phosphate(out) + ATP + H2O = ADP + 2 phosphate(in) + H(+). In terms of biological role, part of the ABC transporter complex PstSACB involved in phosphate import. Responsible for energy coupling to the transport system. The sequence is that of Phosphate import ATP-binding protein PstB from Streptomyces coelicolor (strain ATCC BAA-471 / A3(2) / M145).